The following is a 252-amino-acid chain: Ribosomal RNA small subunit methyltransferase J (252 aa).

S-adenosyl-L-methionine is bound by residues 104–105, 120–121, 156–157, and Asp-174; these read RD, ER, and SS.

Belongs to the methyltransferase superfamily. RsmJ family.

It is found in the cytoplasm. It catalyses the reaction guanosine(1516) in 16S rRNA + S-adenosyl-L-methionine = N(2)-methylguanosine(1516) in 16S rRNA + S-adenosyl-L-homocysteine + H(+). Functionally, specifically methylates the guanosine in position 1516 of 16S rRNA. The chain is Ribosomal RNA small subunit methyltransferase J from Yersinia enterocolitica serotype O:8 / biotype 1B (strain NCTC 13174 / 8081).